The primary structure comprises 366 residues: MNFSTYFENLSVPNNISGNITFPISEDCALPLPMIFTLALAYGAVIILGLSGNLALIIIILKQKEMRNVTNILIVNLSFSDLLATIMCLPFTLIYTLMDHWIFGEVMCKLNEYIQCVSVTVSIFSLVLIAIERHQLIINPRGWRPNNRHACFGITVIWGFAMACSTPLMMYSVLTDEPFKNISLDSYIGKYVCLEDFPEDKFRLSYTTLLFILQYLGPLCFIFVCYTKIFLRLKRRNNMMDKIRDNKYRSSETKRINIMLLSIVVGFALCWLPFFIFNLVFDWNHEAVATCNHNLLFLICHLTAMISTCVNPIFYGFLNKNFQRDLQFFFNFCDFRSREDDYETIAMSTMHTDVSKTSLKQASPIA.

At 1 to 39 (MNFSTYFENLSVPNNISGNITFPISEDCALPLPMIFTLA) the chain is on the extracellular side. 3 N-linked (GlcNAc...) asparagine glycosylation sites follow: N2, N9, and N15. Residues 40-60 (LAYGAVIILGLSGNLALIIII) form a helical membrane-spanning segment. Residues 61–82 (LKQKEMRNVTNILIVNLSFSDL) lie on the Cytoplasmic side of the membrane. Residues 83 to 103 (LATIMCLPFTLIYTLMDHWIF) traverse the membrane as a helical segment. The Extracellular portion of the chain corresponds to 104–111 (GEVMCKLN). C108 and C193 are joined by a disulfide. Residues 112-132 (EYIQCVSVTVSIFSLVLIAIE) traverse the membrane as a helical segment. Residues 133-149 (RHQLIINPRGWRPNNRH) are Cytoplasmic-facing. The helical transmembrane segment at 150-170 (ACFGITVIWGFAMACSTPLMM) threads the bilayer. Residues 171–203 (YSVLTDEPFKNISLDSYIGKYVCLEDFPEDKFR) lie on the Extracellular side of the membrane. A glycan (N-linked (GlcNAc...) asparagine) is linked at N181. A helical transmembrane segment spans residues 204–224 (LSYTTLLFILQYLGPLCFIFV). At 225–260 (CYTKIFLRLKRRNNMMDKIRDNKYRSSETKRINIML) the chain is on the cytoplasmic side. The chain crosses the membrane as a helical span at residues 261–281 (LSIVVGFALCWLPFFIFNLVF). The Extracellular segment spans residues 282 to 294 (DWNHEAVATCNHN). Residues 295-315 (LLFLICHLTAMISTCVNPIFY) traverse the membrane as a helical segment. At 316–366 (GFLNKNFQRDLQFFFNFCDFRSREDDYETIAMSTMHTDVSKTSLKQASPIA) the chain is on the cytoplasmic side. The S-palmitoyl cysteine moiety is linked to residue C333.

This sequence belongs to the G-protein coupled receptor 1 family.

It is found in the cell membrane. Receptor for neuropeptide Y and peptide YY. The sequence is that of Neuropeptide Y receptor type 1 (npy1r) from Xenopus laevis (African clawed frog).